We begin with the raw amino-acid sequence, 689 residues long: DNA ligase (689 aa).

Residues 58–62 (DQEYD), 107–108 (SL), and Glu138 contribute to the NAD(+) site. Lys140 acts as the N6-AMP-lysine intermediate in catalysis. NAD(+) contacts are provided by Arg161, Glu198, Lys314, and Lys338. Positions 432, 435, 448, and 453 each coordinate Zn(2+). The BRCT domain maps to 611–689 (ASSGTLSGKT…QELLEMLHGG (79 aa)).

Belongs to the NAD-dependent DNA ligase family. LigA subfamily. Requires Mg(2+) as cofactor. Mn(2+) serves as cofactor.

It catalyses the reaction NAD(+) + (deoxyribonucleotide)n-3'-hydroxyl + 5'-phospho-(deoxyribonucleotide)m = (deoxyribonucleotide)n+m + AMP + beta-nicotinamide D-nucleotide.. Functionally, DNA ligase that catalyzes the formation of phosphodiester linkages between 5'-phosphoryl and 3'-hydroxyl groups in double-stranded DNA using NAD as a coenzyme and as the energy source for the reaction. It is essential for DNA replication and repair of damaged DNA. This is DNA ligase from Methylacidiphilum infernorum (isolate V4) (Methylokorus infernorum (strain V4)).